Consider the following 294-residue polypeptide: Protease HtpX homolog 2 (294 aa).

2 helical membrane passes run 15–35 (MLFTMFLLAAVYLFFLAFLSY) and 36–56 (YGTSQIFIILFIGLFMAAQYF). H140 is a binding site for Zn(2+). Residue E141 is part of the active site. H144 provides a ligand contact to Zn(2+). Transmembrane regions (helical) follow at residues 151–171 (AVLTIASFLSSVAFYIVRYSL) and 185–205 (GGIMLVWLVSIVVWIVSFLLI). Residue E213 participates in Zn(2+) binding.

It belongs to the peptidase M48B family. Zn(2+) serves as cofactor.

It localises to the cell membrane. The sequence is that of Protease HtpX homolog 2 from Methanosarcina mazei (strain ATCC BAA-159 / DSM 3647 / Goe1 / Go1 / JCM 11833 / OCM 88) (Methanosarcina frisia).